Here is a 192-residue protein sequence, read N- to C-terminus: E3 ubiquitin-protein ligase RNF185 (192 aa).

Residues 1–13 (MASKGPSASASTE) show a composition bias toward polar residues. The tract at residues 1-30 (MASKGPSASASTENSNAGGPSGSSNGTGES) is disordered. The Cytoplasmic portion of the chain corresponds to 1-130 (MASKGPSASA…GGFQGFGFGD (130 aa)). The span at 14–27 (NSNAGGPSGSSNGT) shows a compositional bias: low complexity. A required for ubiquitin ligase activity and protection against ER stress-induced cell death region spans residues 29-80 (ESGGQDSTFECNICLDTAKDAVISLCGHLFCWPCLHQWLETRPNRQVCPVCK). An RING-type zinc finger spans residues 39-80 (CNICLDTAKDAVISLCGHLFCWPCLHQWLETRPNRQVCPVCK). Positions 90 to 123 (PLYGRGSTGQQDPREKTPPRPQGQRPEPENRGGF) are disordered. The chain crosses the membrane as a helical span at residues 131-151 (GGFQMSFGIGAFPFGIFATAF). Over 152–171 (NINDGRPPPAVPGTPQYVDE) the chain is Mitochondrial intermembrane. The chain crosses the membrane as a helical span at residues 172–192 (QFLSRLFLFVALVIMFWLLIA).

In terms of assembly, interacts with ATG5 and BNIP1. Ubiquitously expressed with high expression in testis.

Its subcellular location is the mitochondrion outer membrane. The protein resides in the endoplasmic reticulum membrane. It carries out the reaction S-ubiquitinyl-[E2 ubiquitin-conjugating enzyme]-L-cysteine + [acceptor protein]-L-lysine = [E2 ubiquitin-conjugating enzyme]-L-cysteine + N(6)-ubiquitinyl-[acceptor protein]-L-lysine.. Its pathway is protein modification; protein ubiquitination. Functionally, E3 ubiquitin-protein ligase that regulates selective mitochondrial autophagy by mediating 'Lys-63'-linked polyubiquitination of BNIP1. Acts in the endoplasmic reticulum (ER)-associated degradation (ERAD) pathway, which targets misfolded proteins that accumulate in the endoplasmic reticulum (ER) for ubiquitination and subsequent proteasome-mediated degradation. Protects cells from ER stress-induced apoptosis. Responsible for the cotranslational ubiquitination and degradation of CFTR in the ERAD pathway. Also acts as a regulator of the innate antiviral response by catalyzing 'Lys-27'-linked polyubiquitination of CGAS, thereby promoting CGAS cyclic GMP-AMP synthase activity. Preferentially associates with the E2 enzymes UBE2J1 and UBE2J2. The chain is E3 ubiquitin-protein ligase RNF185 (Rnf185) from Mus musculus (Mouse).